The primary structure comprises 1402 residues: Phospholipid-transporting ATPase dnf2 (1402 aa).

4 helical membrane passes run 109 to 129, 135 to 155, 457 to 477, and 501 to 521; these read FQNVANLFFLFLVILQSISIF, PGLAAVPLIVVVGITAVKDAI, LNFIILFSMCFVCAVVEGIAW, and VVTFFTGVILFQNLVPISLYI. Asp569 (4-aspartylphosphate intermediate) is an active-site residue. 15 residues coordinate ATP: Asp569, Lys570, Thr571, Glu700, Phe741, Ser743, Lys746, Lys764, Arg799, Thr800, Thr879, Gly880, Asp881, Arg986, and Lys992. Asp569 lines the Mg(2+) pocket. Residue Thr571 coordinates Mg(2+). A Mg(2+)-binding site is contributed by Asp1012. Residues Asn1015 and Asp1016 each contribute to the ATP site. Residue Asp1016 participates in Mg(2+) binding. 6 helical membrane-spanning segments follow: residues 1066–1086, 1101–1121, 1151–1171, 1193–1213, 1218–1238, and 1260–1280; these read VAEMVNNFFYKSVVWTFTLFW, YTYVMLFNLIFSSLPVIVMGV, IFIGYMLDGFYQSVICFFFSF, LGVYVAAPTIMVVDTYVILNQ, VFSIGLWALSCLTFWFWTGVY, and FWAVLCGTIVSCLFPKFLFMT. Lys1275 provides a ligand contact to a 1,2-diacyl-sn-glycero-3-phospho-L-serine.

It belongs to the cation transport ATPase (P-type) (TC 3.A.3) family. Type IV subfamily. Requires Mg(2+) as cofactor.

The protein resides in the cell membrane. Its subcellular location is the endoplasmic reticulum membrane. The catalysed reaction is ATP + H2O + phospholipidSide 1 = ADP + phosphate + phospholipidSide 2.. It catalyses the reaction a 1,2-diacyl-sn-glycero-3-phosphoethanolamine(out) + ATP + H2O = a 1,2-diacyl-sn-glycero-3-phosphoethanolamine(in) + ADP + phosphate + H(+). It carries out the reaction a 1,2-diacyl-sn-glycero-3-phosphocholine(out) + ATP + H2O = a 1,2-diacyl-sn-glycero-3-phosphocholine(in) + ADP + phosphate + H(+). The enzyme catalyses a beta-D-glucosyl-(1&lt;-&gt;1')-N-acylsphing-4-enine(out) + ATP + H2O = a beta-D-glucosyl-(1&lt;-&gt;1')-N-acylsphing-4-enine(in) + ADP + phosphate + H(+). The catalysed reaction is a 1,2-diacyl-sn-glycero-3-phospho-L-serine(out) + ATP + H2O = a 1,2-diacyl-sn-glycero-3-phospho-L-serine(in) + ADP + phosphate + H(+). Its function is as follows. Catalytic component of a P4-ATPase flippase complex which catalyzes the hydrolysis of ATP coupled to the transport of glucosylceramide, phosphatidylcholine, phosphatidylethanolamine, and small amounts of phosphatidylserine from the lumenal to the cytosolic leaflet of the cell membrane and ensures the maintenance of asymmetric distribution of phospholipids. The protein is Phospholipid-transporting ATPase dnf2 of Schizosaccharomyces pombe (strain 972 / ATCC 24843) (Fission yeast).